A 398-amino-acid chain; its full sequence is Acetyl-CoA acetyltransferase (398 aa).

Ser2 is subject to N-acetylserine. Residue Cys91 is the Acyl-thioester intermediate of the active site. 2 residues coordinate CoA: Tyr186 and Lys231. Tyr186 lines the K(+) pocket. Ala248, Ala249, and Ala251 together coordinate K(+). Residue Ser252 coordinates CoA. A K(+)-binding site is contributed by Val350. Catalysis depends on proton acceptor residues His354 and Cys384.

This sequence belongs to the thiolase-like superfamily. Thiolase family. As to quaternary structure, homotetramer.

It is found in the cytoplasm. The catalysed reaction is 2 acetyl-CoA = acetoacetyl-CoA + CoA. The protein operates within metabolic intermediate biosynthesis; (R)-mevalonate biosynthesis; (R)-mevalonate from acetyl-CoA: step 1/3. Acetyl-CoA acetyltransferase; part of the first module of ergosterol biosynthesis pathway that includes the early steps of the pathway, conserved across all eukaryotes, and which results in the formation of mevalonate from acetyl-coenzyme A (acetyl-CoA). In this module, the acetyl-CoA acetyltransferase ERG10 catalyzes the formation of acetoacetyl-CoA. The hydroxymethylglutaryl-CoA synthase ERG13 then condenses acetyl-CoA with acetoacetyl-CoA to form HMG-CoA. The rate-limiting step of the early module is the reduction to mevalonate by the 3-hydroxy-3-methylglutaryl-coenzyme A (HMG-CoA) reductases HMG1 and HMG2 which are derived from a single ancestral HMGR gene by gene duplication. The sequence is that of Acetyl-CoA acetyltransferase from Saccharomyces pastorianus (strain ATCC 76670 / Carlsberg bottom yeast no.2 / CBS 1503 / CLIB 180 / NBRC 10610 / NRRL Y-1525) (Saaz-type lager yeast).